The sequence spans 185 residues: MISSNDFRPGVSIVLDGSVWRVIDFLHVKPGKGSAFVRTTLKNVQSGKVLEKTFRAGETVPQATLEKITMQHTYKEGDEFVFMDMESYEEGRLSASQIGDRVKYLKEGMEVNVIRWGEQVLEVELANSVVLEVIQTDPGVKGDTATGGTKPAIVETGATVMVPLFISQGERIKIDTRDDKYLGRE.

This sequence belongs to the elongation factor P family.

The protein resides in the cytoplasm. Its pathway is protein biosynthesis; polypeptide chain elongation. Involved in peptide bond synthesis. Stimulates efficient translation and peptide-bond synthesis on native or reconstituted 70S ribosomes in vitro. Probably functions indirectly by altering the affinity of the ribosome for aminoacyl-tRNA, thus increasing their reactivity as acceptors for peptidyl transferase. The protein is Elongation factor P of Trichormus variabilis (strain ATCC 29413 / PCC 7937) (Anabaena variabilis).